Reading from the N-terminus, the 211-residue chain is Redox-sensing transcriptional repressor Rex (211 aa).

A DNA-binding region (H-T-H motif) is located at residues 17 to 56 (LYYRLVSILKGKGIDRVNSKTISEALQIDSATIRRDFSYF). 91–96 (GIGNLG) contacts NAD(+).

The protein belongs to the transcriptional regulatory Rex family. As to quaternary structure, homodimer.

It localises to the cytoplasm. Modulates transcription in response to changes in cellular NADH/NAD(+) redox state. This chain is Redox-sensing transcriptional repressor Rex, found in Staphylococcus epidermidis (strain ATCC 12228 / FDA PCI 1200).